The chain runs to 667 residues: tRNA 5-methylaminomethyl-2-thiouridine biosynthesis bifunctional protein MnmC (667 aa).

A compositionally biased stretch (polar residues) spans 1–12; that stretch reads MSKQQAPNTTGI. Residues 1 to 20 form a disordered region; it reads MSKQQAPNTTGIGTADLQWH. The segment at 1-240 is tRNA (mnm(5)s(2)U34)-methyltransferase; that stretch reads MSKQQAPNTT…KRECLRGVLE (240 aa). The tract at residues 268 to 667 is FAD-dependent cmnm(5)s(2)U34 oxidoreductase; it reads IGAGIAGAAC…LVRSLKKPPL (400 aa).

It in the N-terminal section; belongs to the methyltransferase superfamily. tRNA (mnm(5)s(2)U34)-methyltransferase family. This sequence in the C-terminal section; belongs to the DAO family. It depends on FAD as a cofactor.

The protein resides in the cytoplasm. It carries out the reaction 5-aminomethyl-2-thiouridine(34) in tRNA + S-adenosyl-L-methionine = 5-methylaminomethyl-2-thiouridine(34) in tRNA + S-adenosyl-L-homocysteine + H(+). Functionally, catalyzes the last two steps in the biosynthesis of 5-methylaminomethyl-2-thiouridine (mnm(5)s(2)U) at the wobble position (U34) in tRNA. Catalyzes the FAD-dependent demodification of cmnm(5)s(2)U34 to nm(5)s(2)U34, followed by the transfer of a methyl group from S-adenosyl-L-methionine to nm(5)s(2)U34, to form mnm(5)s(2)U34. In Magnetococcus marinus (strain ATCC BAA-1437 / JCM 17883 / MC-1), this protein is tRNA 5-methylaminomethyl-2-thiouridine biosynthesis bifunctional protein MnmC.